A 552-amino-acid polypeptide reads, in one-letter code: Formate--tetrahydrofolate ligase (552 aa).

65–72 (TPAGEGKT) is a binding site for ATP.

It belongs to the formate--tetrahydrofolate ligase family.

It catalyses the reaction (6S)-5,6,7,8-tetrahydrofolate + formate + ATP = (6R)-10-formyltetrahydrofolate + ADP + phosphate. It functions in the pathway one-carbon metabolism; tetrahydrofolate interconversion. The sequence is that of Formate--tetrahydrofolate ligase from Fervidobacterium nodosum (strain ATCC 35602 / DSM 5306 / Rt17-B1).